Reading from the N-terminus, the 241-residue chain is Fatty acid metabolism regulator protein (241 aa).

In terms of domain architecture, HTH gntR-type spans 11–79 (QSPAGLAEEY…HGKPTKVNNI (69 aa)). A DNA-binding region (H-T-H motif) is located at residues 39 to 58 (ERELAEKIGVTRTTLREVLQ).

Homodimer.

It localises to the cytoplasm. In terms of biological role, multifunctional regulator of fatty acid metabolism. The protein is Fatty acid metabolism regulator protein of Pasteurella multocida (strain Pm70).